A 358-amino-acid polypeptide reads, in one-letter code: Leukotriene B4 receptor 2 (358 aa).

Residues 1–24 (MSVCYRPPGNETLLSWKTSRATGT) lie on the Extracellular side of the membrane. Residue Asn10 is glycosylated (N-linked (GlcNAc...) asparagine). A helical transmembrane segment spans residues 25–45 (AFLLLAALLGLPGNGFVVWSL). The Cytoplasmic segment spans residues 46-60 (AGWRPARGRPLAATL). Residues 61 to 81 (VLHLALADGAVLLLTPLFVAF) form a helical membrane-spanning segment. Over 82-96 (LTRQAWPLGQAGCKA) the chain is Extracellular. Residues 97 to 117 (VYYVCALSMYASVLLTGLLSL) traverse the membrane as a helical segment. Residues 118–140 (QRCLAVTRPFLAPRLRSPALARR) lie on the Cytoplasmic side of the membrane. The chain crosses the membrane as a helical span at residues 141-161 (LLLAVWLAALLLAVPAAVYRH). The Extracellular segment spans residues 162–185 (LWRDRVCQLCHPSPVHAAAHLSLE). A helical membrane pass occupies residues 186-206 (TLTAFVLPFGLMLGCYSVTLA). Residues 207–224 (RLRGARWGSGRHGARVGR) are Cytoplasmic-facing. Residues 225–245 (LVSAIVLAFGLLWAPYHAVNL) traverse the membrane as a helical segment. The Extracellular segment spans residues 246–275 (LQAVAALAPPEGALAKLGGAGQAARAGTTA). The chain crosses the membrane as a helical span at residues 276–296 (LAFFSSSVNPVLYVFTAGDLL). The Cytoplasmic portion of the chain corresponds to 297-358 (PRAGPRFLTR…MEKDGPEWDL (62 aa)). The tract at residues 311–358 (SGEARGGGRSREGTMELRTTPQLKVVGQGRGNGDPGGGMEKDGPEWDL) is disordered. Positions 338–348 (QGRGNGDPGGG) are enriched in gly residues. A compositionally biased stretch (basic and acidic residues) spans 349–358 (MEKDGPEWDL).

Belongs to the G-protein coupled receptor 1 family. In terms of tissue distribution, widely expressed.

The protein localises to the cell membrane. Its function is as follows. Low-affinity receptor for leukotrienes including leukotriene B4. Mediates chemotaxis of granulocytes and macrophages. The response is mediated via G-proteins that activate a phosphatidylinositol-calcium second messenger system. The rank order of affinities for the leukotrienes is LTB4 &gt; 12-epi-LTB4 &gt; LTB5 &gt; LTB3. The sequence is that of Leukotriene B4 receptor 2 (LTB4R2) from Homo sapiens (Human).